Here is a 367-residue protein sequence, read N- to C-terminus: D-alanine--D-alanine ligase (367 aa).

Positions 145-351 constitute an ATP-grasp domain; sequence KRLLRDAGLP…QPALMDELVA (207 aa). Residue 174 to 229 participates in ATP binding; it reads RAVGSSELFVKPANLGSSVGISKTRDAAEFEAACQLALRFDRKILIERCIAPVREI. The Mg(2+) site is built by Asp306, Glu318, and Asn320.

The protein belongs to the D-alanine--D-alanine ligase family. It depends on Mg(2+) as a cofactor. Mn(2+) is required as a cofactor.

Its subcellular location is the cytoplasm. It catalyses the reaction 2 D-alanine + ATP = D-alanyl-D-alanine + ADP + phosphate + H(+). The protein operates within cell wall biogenesis; peptidoglycan biosynthesis. Its function is as follows. Cell wall formation. The sequence is that of D-alanine--D-alanine ligase from Bradyrhizobium sp. (strain ORS 278).